Here is a 332-residue protein sequence, read N- to C-terminus: MAVFTAVSDSDLAQWMRHYELGDVLAFRGIPSGIENSNFFLTTTRGEYVLTIFEKLTAEQLPFYLDLMRHLASHRVPVPDPVPRDDGALFGLLHGKPAAIVTKLDGAAELAPGVEHCIEVGQMLARMHLAGRDYARQQPNLRSLPWWQENVPAIVPFISDAQRALLESELAHQAAFFASDDYAALPSGPCHCDLFRDNVLFAHAAPGTGHDVRLGGFFDFYFAGCDKWLFDVAVTVNDWCVDLATGVLDTARADALLRAYQTVRPFTAEERRHWSDMLRAGAYRFWVSRLYDFYLPRAAEMLKPHDPGHFERILRERIAHTPALPETHTACN.

Belongs to the pseudomonas-type ThrB family.

It carries out the reaction L-homoserine + ATP = O-phospho-L-homoserine + ADP + H(+). The protein operates within amino-acid biosynthesis; L-threonine biosynthesis; L-threonine from L-aspartate: step 4/5. This Burkholderia vietnamiensis (strain G4 / LMG 22486) (Burkholderia cepacia (strain R1808)) protein is Homoserine kinase.